The sequence spans 357 residues: UDP-N-acetylglucosamine--N-acetylmuramyl-(pentapeptide) pyrophosphoryl-undecaprenol N-acetylglucosamine transferase (357 aa).

Residues 12–14 (TGG), N124, R162, S190, I243, 262–267 (ALTVAE), and Q288 each bind UDP-N-acetyl-alpha-D-glucosamine.

Belongs to the glycosyltransferase 28 family. MurG subfamily.

The protein resides in the cell inner membrane. The enzyme catalyses di-trans,octa-cis-undecaprenyl diphospho-N-acetyl-alpha-D-muramoyl-L-alanyl-D-glutamyl-meso-2,6-diaminopimeloyl-D-alanyl-D-alanine + UDP-N-acetyl-alpha-D-glucosamine = di-trans,octa-cis-undecaprenyl diphospho-[N-acetyl-alpha-D-glucosaminyl-(1-&gt;4)]-N-acetyl-alpha-D-muramoyl-L-alanyl-D-glutamyl-meso-2,6-diaminopimeloyl-D-alanyl-D-alanine + UDP + H(+). Its pathway is cell wall biogenesis; peptidoglycan biosynthesis. Cell wall formation. Catalyzes the transfer of a GlcNAc subunit on undecaprenyl-pyrophosphoryl-MurNAc-pentapeptide (lipid intermediate I) to form undecaprenyl-pyrophosphoryl-MurNAc-(pentapeptide)GlcNAc (lipid intermediate II). The protein is UDP-N-acetylglucosamine--N-acetylmuramyl-(pentapeptide) pyrophosphoryl-undecaprenol N-acetylglucosamine transferase of Alcanivorax borkumensis (strain ATCC 700651 / DSM 11573 / NCIMB 13689 / SK2).